The following is a 29-amino-acid chain: uncharacterized protein (29 aa).

The protein localises to the plastid. Its subcellular location is the chloroplast. This is an uncharacterized protein from Trieres chinensis (Marine centric diatom).